Here is a 150-residue protein sequence, read N- to C-terminus: Infection structure-specific protein 24 (150 aa).

Its function is as follows. Involved in the development of infection structures. The germ tube elongates across the leaf surface of the infected plant until it recognizes a stomate. Physical stimuli provided by the stomate induce differentiation of the germ tube to form a series of infection structures involved in host colonization. The polypeptide is Infection structure-specific protein 24 (INF24) (Uromyces appendiculatus (Rust fungus)).